A 134-amino-acid chain; its full sequence is UPF0102 protein Rmet_3430 (134 aa).

This sequence belongs to the UPF0102 family.

This Cupriavidus metallidurans (strain ATCC 43123 / DSM 2839 / NBRC 102507 / CH34) (Ralstonia metallidurans) protein is UPF0102 protein Rmet_3430.